Reading from the N-terminus, the 107-residue chain is MSQRLTDVLQRLAATIEARKGGDPSVSYTAKLLNDPALAAKKLGEEAVETVIAAVAQGSDALAAESADLLYHWLALMAASGVSLDAVAEKLEAREGTSGIAEKASRA.

The protein belongs to the PRA-PH family.

It localises to the cytoplasm. It carries out the reaction 1-(5-phospho-beta-D-ribosyl)-ATP + H2O = 1-(5-phospho-beta-D-ribosyl)-5'-AMP + diphosphate + H(+). It participates in amino-acid biosynthesis; L-histidine biosynthesis; L-histidine from 5-phospho-alpha-D-ribose 1-diphosphate: step 2/9. This chain is Phosphoribosyl-ATP pyrophosphatase (hisE), found in Caulobacter vibrioides (strain ATCC 19089 / CIP 103742 / CB 15) (Caulobacter crescentus).